Reading from the N-terminus, the 383-residue chain is Ceramide synthase 3 (383 aa).

Residues 32 to 52 traverse the membrane as a helical segment; sequence VFVKASHLYITIPYAFLLMVV. The segment at 66–127 is homeobox-like; sequence NALGIKKTQH…RIRQKQNKPC (62 aa). Residues 130–331 enclose the TLC domain; the sequence is QKFQESCWRF…ILKMLNRCIF (202 aa). 5 consecutive transmembrane segments (helical) span residues 139-159, 174-194, 205-225, 263-283, and 302-322; these read FTFY…KPWA, LLPS…SLVF, FLAH…SWCA, LFFI…PFWI, and IFLN…GYFI. The Cytoplasmic segment spans residues 323–383; the sequence is LKMLNRCIFT…HLIANGQHGR (61 aa). At Ser340 the chain carries Phosphoserine. The segment at 340–383 is disordered; it reads SDNEEEEEEEEEEEAESTKGKETEYLKNGLGTNRHLIANGQHGR. The segment covering 342-354 has biased composition (acidic residues); it reads NEEEEEEEEEEEA. The span at 355–364 shows a compositional bias: basic and acidic residues; it reads ESTKGKETEY.

As to expression, predominantly expressed in testis. In skin, present in the upper stratum spinosum and stratum granulosum (at protein level).

It is found in the endoplasmic reticulum membrane. It catalyses the reaction a very long-chain fatty acyl-CoA + a sphingoid base = an N-(very-long-chain fatty acyl)-sphingoid base + CoA + H(+). The enzyme catalyses docosanoyl-CoA + sphinganine = N-docosanoylsphinganine + CoA + H(+). The catalysed reaction is tetracosanoyl-CoA + sphinganine = N-tetracosanoylsphinganine + CoA + H(+). It carries out the reaction hexacosanoyl-CoA + sphinganine = N-hexacosanoylsphinganine + CoA + H(+). It catalyses the reaction 2-hydroxydocosanoyl-CoA + sphinganine = N-(2-hydroxydocosanoyl)-sphinganine + CoA + H(+). The enzyme catalyses 2-hydroxytetracosanoyl-CoA + sphinganine = N-(2-hydroxytetracosanoyl)-sphinganine + CoA + H(+). The catalysed reaction is an ultra-long-chain fatty acyl-CoA + a sphingoid base = an N-(ultra-long-chain-acyl)-sphingoid base + CoA + H(+). It carries out the reaction octacosanoyl-CoA + sphinganine = N-(octacosanoyl)-sphinganine + CoA + H(+). It catalyses the reaction a fatty acyl-CoA + sphing-4-enine = an N-acylsphing-4-enine + CoA + H(+). The enzyme catalyses sphinganine + octadecanoyl-CoA = N-(octadecanoyl)-sphinganine + CoA + H(+). The catalysed reaction is 2-hydroxyoctadecanoyl-CoA + sphinganine = N-(2-hydroxyoctadecanoyl)-sphinganine + CoA + H(+). It functions in the pathway lipid metabolism; sphingolipid metabolism. Its function is as follows. Ceramide synthase that catalyzes the transfer of the acyl chain from acyl-CoA to a sphingoid base, with high selectivity toward very- and ultra-long-chain fatty acyl-CoA (chain length greater than C22). N-acylates sphinganine and sphingosine bases to form dihydroceramides and ceramides in de novo synthesis and salvage pathways, respectively. It is crucial for the synthesis of ultra-long-chain ceramides in the epidermis, to maintain epidermal lipid homeostasis and terminal differentiation. The sequence is that of Ceramide synthase 3 from Mus musculus (Mouse).